The sequence spans 556 residues: 2-isopropylmalate synthase (556 aa).

A Pyruvate carboxyltransferase domain is found at 33–307 (PIWCSSDLRD…NPGLDFSDID (275 aa)). 4 residues coordinate Mg(2+): D42, H246, H248, and N282. The interval 439–556 (ANVPYALISH…SLSQTQAKAA (118 aa)) is regulatory domain.

The protein belongs to the alpha-IPM synthase/homocitrate synthase family. LeuA type 2 subfamily. As to quaternary structure, homodimer. Mg(2+) serves as cofactor.

Its subcellular location is the cytoplasm. The catalysed reaction is 3-methyl-2-oxobutanoate + acetyl-CoA + H2O = (2S)-2-isopropylmalate + CoA + H(+). It functions in the pathway amino-acid biosynthesis; L-leucine biosynthesis; L-leucine from 3-methyl-2-oxobutanoate: step 1/4. Functionally, catalyzes the condensation of the acetyl group of acetyl-CoA with 3-methyl-2-oxobutanoate (2-ketoisovalerate) to form 3-carboxy-3-hydroxy-4-methylpentanoate (2-isopropylmalate). The polypeptide is 2-isopropylmalate synthase (Pseudomonas syringae pv. syringae (strain B728a)).